The chain runs to 181 residues: Ribulose bisphosphate carboxylase small subunit, chloroplastic 2 (181 aa).

The transit peptide at 1–57 (MAFLIMSSAAAVATGTNAAQASMIAPFTGLKSATSFPVSRKQNLDITSIASNGGRVQ) directs the protein to the chloroplast.

Belongs to the RuBisCO small chain family. As to quaternary structure, heterohexadecamer of 8 large and 8 small subunits.

The protein localises to the plastid. Its subcellular location is the chloroplast. In terms of biological role, ruBisCO catalyzes two reactions: the carboxylation of D-ribulose 1,5-bisphosphate, the primary event in carbon dioxide fixation, as well as the oxidative fragmentation of the pentose substrate. Both reactions occur simultaneously and in competition at the same active site. Although the small subunit is not catalytic it is essential for maximal activity. The chain is Ribulose bisphosphate carboxylase small subunit, chloroplastic 2 from Nicotiana sylvestris (Wood tobacco).